The sequence spans 208 residues: FMN-dependent NADH:quinone oxidoreductase 1 (208 aa).

Residue serine 17–serine 19 coordinates FMN.

This sequence belongs to the azoreductase type 1 family. Homodimer. It depends on FMN as a cofactor.

The catalysed reaction is 2 a quinone + NADH + H(+) = 2 a 1,4-benzosemiquinone + NAD(+). It catalyses the reaction N,N-dimethyl-1,4-phenylenediamine + anthranilate + 2 NAD(+) = 2-(4-dimethylaminophenyl)diazenylbenzoate + 2 NADH + 2 H(+). Its function is as follows. Quinone reductase that provides resistance to thiol-specific stress caused by electrophilic quinones. Also exhibits azoreductase activity. Catalyzes the reductive cleavage of the azo bond in aromatic azo compounds to the corresponding amines. The chain is FMN-dependent NADH:quinone oxidoreductase 1 from Listeria monocytogenes serovar 1/2a (strain ATCC BAA-679 / EGD-e).